The following is a 234-amino-acid chain: tRNA1(Val) (adenine(37)-N6)-methyltransferase (234 aa).

Belongs to the methyltransferase superfamily. tRNA (adenine-N(6)-)-methyltransferase family.

Its subcellular location is the cytoplasm. The enzyme catalyses adenosine(37) in tRNA1(Val) + S-adenosyl-L-methionine = N(6)-methyladenosine(37) in tRNA1(Val) + S-adenosyl-L-homocysteine + H(+). In terms of biological role, specifically methylates the adenine in position 37 of tRNA(1)(Val) (anticodon cmo5UAC). This Phocaeicola vulgatus (strain ATCC 8482 / DSM 1447 / JCM 5826 / CCUG 4940 / NBRC 14291 / NCTC 11154) (Bacteroides vulgatus) protein is tRNA1(Val) (adenine(37)-N6)-methyltransferase.